We begin with the raw amino-acid sequence, 206 residues long: MLMLFFTVAMVHIVALMSPGPDFFFVSQTAVSRSRKEAMMGVLGITCGVMVWAGVALLGLHLIIEKMAWLHTIIMVGGGLYLCWMGYQMLRGALKKQDAAASSPHIELAQSGRSFLKGLLTNLSNPKAIIYFGSVFSLFVGDNVGAAARWGIFALITLETLAWFTVVASLFALPKMRRGYQRLAKWIDGFAGALFAGFGIHLIISR.

Residues Met-1–Pro-21 traverse the membrane as a helical segment. The Periplasmic portion of the chain corresponds to Asp-22 to Leu-43. Residues Gly-44–Ile-64 traverse the membrane as a helical segment. Residues Glu-65 to Lys-66 are Cytoplasmic-facing. The helical transmembrane segment at Met-67–Tyr-87 threads the bilayer. Residues Gln-88 to Arg-149 are Periplasmic-facing. A helical membrane pass occupies residues Trp-150 to Leu-173. Residues Pro-174 to Arg-206 are Cytoplasmic-facing.

The protein belongs to the Rht family.

It is found in the cell inner membrane. In terms of biological role, conducts the efflux of threonine. This Salmonella typhi protein is Threonine efflux protein (rhtC).